The primary structure comprises 426 residues: Inhibin beta A chain (426 aa).

A signal peptide spans 1–20 (MPLLWLRGFLLASCWIIVKS). The propeptide occupies 21–310 (SPTPGSEGHS…EDHPHRRRRR (290 aa)). A glycan (N-linked (GlcNAc...) asparagine) is linked at Asn-165. Residues 177–186 (QQQKHPQGSS) are compositionally biased toward polar residues. Disordered regions lie at residues 177–201 (QQQKHPQGSSDTREEAEEADLMEER) and 260–291 (KKKKEEEGEGKKKDGGEAGAGVDEEKEQSHRP). Residues 263–275 (KEEEGEGKKKDGG) show a composition bias toward basic and acidic residues. 4 cysteine pairs are disulfide-bonded: Cys-314/Cys-322, Cys-321/Cys-391, Cys-350/Cys-423, and Cys-354/Cys-425.

This sequence belongs to the TGF-beta family. Dimeric, linked by one or more disulfide bonds. Inhibin A is a dimer of alpha/INHA and beta-A/INHBA. Activin A is a homodimer of beta-A/INHBA. Activin AB is a dimer of beta-A/INHBA and beta-B/INHBB. Interacts with FST and FSTL3; these interactions prevent activin A interaction to its type II receptor. Activin A interacts with ACVR2A. Activin A interacts with BMPR2. Inhibin A interacts with ACVR1; this interaction creates a non-signaling complex (NSC) that inhibits ACVR1-mediated BMP signaling. Inhibin A interacts with ACVR2A.

The protein localises to the secreted. Its function is as follows. Inhibins/activins are involved in regulating a number of diverse functions such as hypothalamic and pituitary hormone secretion, gonadal hormone secretion, germ cell development and maturation, erythroid differentiation, insulin secretion, nerve cell survival, embryonic axial development or bone growth, depending on their subunit composition. In terms of biological role, activin A is a homodimer of INHBA that plays a role in several essential biological processes including embryonic development, stem cell maintenance and differentiation, haematopoiesis, cell proliferation and tissue fibrosis. Signals through type I (such as ACVR1B or ACVR1C) and type II receptors (such as ACVR2A, ACVR2B or BMPR2) which, upon ligand binding, phosphorylate SMAD2 and SMAD3 intracellular signaling mediators that form a complex with SMAD4, translocate to the nucleus and modulate gene expression. Can also activate alternative non-canonical intracellular signaling pathways including the p38 MAPK, extracellular signal-regulated kinases 1/2 (ERK1/2) and c-Jun N-terminal kinases (JNKs) to modulate cell migration and differentiation. Alternatively, promotes osteoblastic differentiation via ACVRL1-SMAD1/5/9 pathway. In addition, can engage the type I receptor ACVR1 to form an ACVR1-activin A-type II receptor non-signaling complex (NSC) that renders receptors unavailable for engagement with BMPs, hence resulting in an apparent inhibition of ACVR1-mediated BMP signaling. Inhibin A is a dimer of alpha/INHA and beta-A/INHBA that functions as a feedback regulator in the hypothalamic-pituitary-gonadal (HPG) axis. Inhibits the secretion of FSH from the anterior pituitary gland by acting on pituitary gonadotrope cells. Antagonizes activin A by binding to the proteoglycan, betaglycan, and forming a stable complex with and, thereby, sequestering type II activin receptors while excluding type I receptor. This Equus caballus (Horse) protein is Inhibin beta A chain (INHBA).